Reading from the N-terminus, the 142-residue chain is Transcription antitermination protein NusB (142 aa).

The protein belongs to the NusB family.

Its function is as follows. Involved in transcription antitermination. Required for transcription of ribosomal RNA (rRNA) genes. Binds specifically to the boxA antiterminator sequence of the ribosomal RNA (rrn) operons. This is Transcription antitermination protein NusB from Roseiflexus sp. (strain RS-1).